The following is a 475-amino-acid chain: 23S rRNA (uracil(1939)-C(5))-methyltransferase RlmD (475 aa).

The span at 1–10 (MAMLGKRRPP) shows a compositional bias: basic residues. The segment at 1 to 33 (MAMLGKRRPPRTANERVRRERGSATRRDDATAD) is disordered. The segment covering 13 to 30 (ANERVRRERGSATRRDDA) has biased composition (basic and acidic residues). One can recognise a TRAM domain in the interval 26-85 (RRDDATADGLSIERLAHDGRGVARDPHGKTVFVDQALPGERVRVAVHRQRKRFDEAHVVE). Cys98, Cys104, Cys107, and Cys183 together coordinate [4Fe-4S] cluster. S-adenosyl-L-methionine-binding residues include Gln294, Phe323, Asn328, Glu344, Asp371, and Asp388. The Nucleophile role is filled by Cys414. Residues 455 to 475 (TRDTPRGRSTSVEREDHGQGP) are disordered. Residues 457–475 (DTPRGRSTSVEREDHGQGP) are compositionally biased toward basic and acidic residues.

This sequence belongs to the class I-like SAM-binding methyltransferase superfamily. RNA M5U methyltransferase family. RlmD subfamily.

It catalyses the reaction uridine(1939) in 23S rRNA + S-adenosyl-L-methionine = 5-methyluridine(1939) in 23S rRNA + S-adenosyl-L-homocysteine + H(+). Its function is as follows. Catalyzes the formation of 5-methyl-uridine at position 1939 (m5U1939) in 23S rRNA. This Chromohalobacter salexigens (strain ATCC BAA-138 / DSM 3043 / CIP 106854 / NCIMB 13768 / 1H11) protein is 23S rRNA (uracil(1939)-C(5))-methyltransferase RlmD.